The following is a 270-amino-acid chain: MLLRSLRSWAARSPRSVGPGSSGSPGSLDSGAGPLWAPRRAWPPDKDRENDKEKKAVVCIEGNIASGKTTCLEFFSNTTDVEVLMEPVLKWRNVHGHNPLSLMYHDASRWGLTLQTYVQLTMLDQHTRPQMSPVRLMERSIYSARYIFVENLYRGGKMPEVDYAILSEWFDWIVRNIDVSVDLIVYLRTTPEICYQRLKMRCREEEKVIPMEYLHAIHRLYEEWLVNGSLFPAAAPVLVIEADHNLEKMLELFEQNRARILTPENWKHGP.

The N-terminal 38 residues, 1 to 38 (MLLRSLRSWAARSPRSVGPGSSGSPGSLDSGAGPLWAP), are a transit peptide targeting the mitochondrion. Residues 1–54 (MLLRSLRSWAARSPRSVGPGSSGSPGSLDSGAGPLWAPRRAWPPDKDRENDKEK) form a disordered region. The segment covering 13 to 34 (SPRSVGPGSSGSPGSLDSGAGP) has biased composition (low complexity). Residues 42–54 (WPPDKDRENDKEK) show a composition bias toward basic and acidic residues. 62-70 (GNIASGKTT) lines the ATP pocket. Residue E138 is the Proton acceptor of the active site.

Belongs to the DCK/DGK family. Homodimer. As to expression, found in most tissues; highly expressed in liver.

It is found in the mitochondrion. It catalyses the reaction thymidine + ATP = dTMP + ADP + H(+). It carries out the reaction 2'-deoxycytidine + ATP = dCMP + ADP + H(+). The enzyme catalyses 2'-deoxyuridine + ATP = dUMP + ADP + H(+). In terms of biological role, phosphorylates thymidine, deoxycytidine, and deoxyuridine in the mitochondrial matrix. In non-replicating cells, where cytosolic dNTP synthesis is down-regulated, mtDNA synthesis depends solely on TK2 and DGUOK. This chain is Thymidine kinase 2, mitochondrial (Tk2), found in Mus musculus (Mouse).